Here is a 184-residue protein sequence, read N- to C-terminus: Protein GrpE (184 aa).

A compositionally biased stretch (basic and acidic residues) spans 1–17 (MQHEDKTPEQQENKTPE). Positions 1 to 39 (MQHEDKTPEQQENKTPETELQQENAPATPQEAGAAGSID) are disordered. Residues 18-27 (TELQQENAPA) are compositionally biased toward polar residues.

Belongs to the GrpE family. Homodimer.

It localises to the cytoplasm. Functionally, participates actively in the response to hyperosmotic and heat shock by preventing the aggregation of stress-denatured proteins, in association with DnaK and GrpE. It is the nucleotide exchange factor for DnaK and may function as a thermosensor. Unfolded proteins bind initially to DnaJ; upon interaction with the DnaJ-bound protein, DnaK hydrolyzes its bound ATP, resulting in the formation of a stable complex. GrpE releases ADP from DnaK; ATP binding to DnaK triggers the release of the substrate protein, thus completing the reaction cycle. Several rounds of ATP-dependent interactions between DnaJ, DnaK and GrpE are required for fully efficient folding. In Methylobacillus flagellatus (strain ATCC 51484 / DSM 6875 / VKM B-1610 / KT), this protein is Protein GrpE.